A 203-amino-acid chain; its full sequence is Probable NADPH:quinone oxidoreductase 2 (203 aa).

It belongs to the SsuE family. In terms of assembly, homotetramer. The cofactor is FMN.

It catalyses the reaction a quinone + NADH + H(+) = a quinol + NAD(+). The enzyme catalyses a quinone + NADPH + H(+) = a quinol + NADP(+). Its function is as follows. The enzyme apparently serves as a quinone reductase in connection with conjugation reactions of hydroquinones involved in detoxification pathways. This is Probable NADPH:quinone oxidoreductase 2 from Oryza sativa subsp. japonica (Rice).